Consider the following 64-residue polypeptide: Metallothionein (64 aa).

The protein belongs to the metallothionein superfamily. Type 4 family.

Its function is as follows. Metallothioneins have a high content of cysteine residues that bind various heavy metals. The protein is Metallothionein of Sterechinus neumayeri (Antarctic sea urchin).